The sequence spans 119 residues: Holo-[acyl-carrier-protein] synthase (119 aa).

Residues Asp-8 and Glu-59 each contribute to the Mg(2+) site.

It belongs to the P-Pant transferase superfamily. AcpS family. Mg(2+) is required as a cofactor.

It localises to the cytoplasm. The enzyme catalyses apo-[ACP] + CoA = holo-[ACP] + adenosine 3',5'-bisphosphate + H(+). Transfers the 4'-phosphopantetheine moiety from coenzyme A to a Ser of acyl-carrier-protein. The sequence is that of Holo-[acyl-carrier-protein] synthase from Lactococcus lactis subsp. cremoris (strain SK11).